The following is a 321-amino-acid chain: Ribose-phosphate pyrophosphokinase (321 aa).

Residues 44–46 (DGE) and 103–104 (RQ) each bind ATP. Residues histidine 137 and aspartate 179 each coordinate Mg(2+). The active site involves lysine 202. Residues arginine 204, aspartate 228, and 232 to 236 (DTAGT) contribute to the D-ribose 5-phosphate site.

The protein belongs to the ribose-phosphate pyrophosphokinase family. Class I subfamily. Homohexamer. The cofactor is Mg(2+).

The protein resides in the cytoplasm. It catalyses the reaction D-ribose 5-phosphate + ATP = 5-phospho-alpha-D-ribose 1-diphosphate + AMP + H(+). Its pathway is metabolic intermediate biosynthesis; 5-phospho-alpha-D-ribose 1-diphosphate biosynthesis; 5-phospho-alpha-D-ribose 1-diphosphate from D-ribose 5-phosphate (route I): step 1/1. Involved in the biosynthesis of the central metabolite phospho-alpha-D-ribosyl-1-pyrophosphate (PRPP) via the transfer of pyrophosphoryl group from ATP to 1-hydroxyl of ribose-5-phosphate (Rib-5-P). This is Ribose-phosphate pyrophosphokinase from Staphylococcus aureus (strain Mu50 / ATCC 700699).